Consider the following 184-residue polypeptide: Nucleoside triphosphate pyrophosphatase (184 aa).

Catalysis depends on Asp-66, which acts as the Proton acceptor.

It belongs to the Maf family. It depends on a divalent metal cation as a cofactor.

Its subcellular location is the cytoplasm. The enzyme catalyses a ribonucleoside 5'-triphosphate + H2O = a ribonucleoside 5'-phosphate + diphosphate + H(+). The catalysed reaction is a 2'-deoxyribonucleoside 5'-triphosphate + H2O = a 2'-deoxyribonucleoside 5'-phosphate + diphosphate + H(+). In terms of biological role, nucleoside triphosphate pyrophosphatase. May have a dual role in cell division arrest and in preventing the incorporation of modified nucleotides into cellular nucleic acids. In Prochlorococcus marinus (strain MIT 9313), this protein is Nucleoside triphosphate pyrophosphatase.